Reading from the N-terminus, the 201-residue chain is tRNA (guanine-N(7)-)-methyltransferase (201 aa).

Residues Glu33, Glu58, Asp85, and Asp108 each contribute to the S-adenosyl-L-methionine site. Asp108 is an active-site residue. Substrate is bound by residues Lys112 and Asp144.

It belongs to the class I-like SAM-binding methyltransferase superfamily. TrmB family.

The catalysed reaction is guanosine(46) in tRNA + S-adenosyl-L-methionine = N(7)-methylguanosine(46) in tRNA + S-adenosyl-L-homocysteine. The protein operates within tRNA modification; N(7)-methylguanine-tRNA biosynthesis. Its function is as follows. Catalyzes the formation of N(7)-methylguanine at position 46 (m7G46) in tRNA. In Anaeromyxobacter dehalogenans (strain 2CP-C), this protein is tRNA (guanine-N(7)-)-methyltransferase.